Reading from the N-terminus, the 524-residue chain is Lysine--tRNA ligase (524 aa).

The Mg(2+) site is built by glutamate 431 and glutamate 438.

Belongs to the class-II aminoacyl-tRNA synthetase family. Homodimer. Requires Mg(2+) as cofactor.

The protein resides in the cytoplasm. It carries out the reaction tRNA(Lys) + L-lysine + ATP = L-lysyl-tRNA(Lys) + AMP + diphosphate. In Chlamydia muridarum (strain MoPn / Nigg), this protein is Lysine--tRNA ligase (lysS).